The following is a 729-amino-acid chain: Solute carrier family 15 member 2 (729 aa).

The segment at 1 to 34 is disordered; sequence MNPFQKNESKETLFSPVSTEEMLPGPPSPPKKST. Residues 1 to 57 are Cytoplasmic-facing; the sequence is MNPFQKNESKETLFSPVSTEEMLPGPPSPPKKSTPKLFGSSYPLSIAFIVVNEFCER. Residue Ser9 is modified to Phosphoserine. A Phosphothreonine modification is found at Thr12. Ser28 is subject to Phosphoserine. A helical membrane pass occupies residues 58 to 78; sequence FSYYGMKAVLTLYFLYFLHWN. Residues 79–87 are Extracellular-facing; that stretch reads EDTSTSVYH. The helical transmembrane segment at 88–108 threads the bilayer; sequence AFSSLCYFTPILGAAIADSWL. The Cytoplasmic portion of the chain corresponds to 109–113; that stretch reads GKFKT. Residues 114-134 traverse the membrane as a helical segment; that stretch reads IIYLSLVYVLGHVFKSLGAIP. The Extracellular segment spans residues 135-139; that stretch reads ILGGK. A helical membrane pass occupies residues 140-160; that stretch reads MLHTILSLVGLSLIALGTGGI. Residues 161–183 are Cytoplasmic-facing; it reads KPCVAAFGGDQFEEEHAEARTRY. Residues 184 to 204 traverse the membrane as a helical segment; sequence FSVFYLSINAGSLISTFITPM. The Extracellular portion of the chain corresponds to 205-217; sequence LRGDVKCFGEDCY. A helical transmembrane segment spans residues 218 to 238; the sequence is ALAFGIPGLLMVLALVVFAMG. Over 239-295 the chain is Cytoplasmic; it reads SKMYRKPPPEGNIVAQVTKCIWFAICNRFRNRSEDIPKRQHWLDWAAEKYPKHLIMD. A helical membrane pass occupies residues 296–316; sequence VKALTRILFLYIPLPMFWALL. Topologically, residues 317 to 343 are extracellular; sequence DQQGSRWTLQANKMDGDLGFFVLQPDQ. A helical membrane pass occupies residues 344 to 364; it reads MQVLNPFLVLVFIPLFDLVIY. Topologically, residues 365–380 are cytoplasmic; sequence RLISKCGVNFSSLRKM. Residues 381 to 401 traverse the membrane as a helical segment; the sequence is AVGMILACLAFAVAALVEIKI. Topologically, residues 402-611 are extracellular; that stretch reads NGMIHPQPAS…PANKLSIAWQ (210 aa). Residues 402–611 form an extracellular domain (ECD) region; that stretch reads NGMIHPQPAS…PANKLSIAWQ (210 aa). Residues Asn448, Asn472, Asn528, and Asn587 are each glycosylated (N-linked (GlcNAc...) asparagine). Residues 612-632 form a helical membrane-spanning segment; it reads LPQYVLVTAAEVMFSVTGLEF. The Cytoplasmic portion of the chain corresponds to 633 to 643; it reads SYSQAPSSMKS. Residues 644–664 traverse the membrane as a helical segment; sequence VLQAAWLLTVAVGNIIVLIVA. Topologically, residues 665 to 674 are extracellular; it reads QFSGLVQWAE. Residues 675–695 form a helical membrane-spanning segment; sequence FVLFSCLLLVVCLIFSVMGYY. Over 696 to 729 the chain is Cytoplasmic; that stretch reads YVPLKSEGIHEATEKQIPHIQGNMINLETKNTRL.

It belongs to the major facilitator superfamily. Proton-dependent oligopeptide transporter (POT/PTR) (TC 2.A.17) family. Interacts (via extracellular domain region) with trypsin. In terms of tissue distribution, expressed in kidney brush border cells (at protein level). Highly expressed in macrophages.

It is found in the apical cell membrane. The protein localises to the cytoplasmic vesicle. It localises to the phagosome membrane. The protein resides in the cell membrane. The enzyme catalyses N-acetyl-D-muramoyl-L-alanyl-D-isoglutamine(out) + 3 H(+)(out) = N-acetyl-D-muramoyl-L-alanyl-D-isoglutamine(in) + 3 H(+)(in). It carries out the reaction a dipeptide(out) + 2 H(+)(out) = a dipeptide(in) + 2 H(+)(in). It catalyses the reaction glycyl-L-leucine(out) + 2 H(+)(out) = glycyl-L-leucine(in) + 2 H(+)(in). The catalysed reaction is glycyl-L-lysine(out) + 2 H(+)(out) = glycyl-L-lysine(in) + 2 H(+)(in). The enzyme catalyses glycyl-L-glutamate(out) + 3 H(+)(out) = glycyl-L-glutamate(in) + 3 H(+)(in). It carries out the reaction L-alanyl-L-alanine(out) + 2 H(+)(out) = L-alanyl-L-alanine(in) + 2 H(+)(in). It catalyses the reaction an L-amino acid tripeptide(out) + 2 H(+)(out) = an L-amino acid tripeptide(in) + 2 H(+)(in). The catalysed reaction is carnosine(out) + 2 H(+)(out) = carnosine(in) + 2 H(+)(in). Proton-coupled amino-acid transporter that transports oligopeptides of 2 to 4 amino acids with a preference for dipeptides. Transports neutral and anionic dipeptides with a proton to peptide stoichiometry of 2:1 or 3:1. In kidney, involved in the absorption of circulating di- and tripeptides from the glomerular filtrate. Can also transport beta-lactam antibiotics, such as the aminocephalosporin cefadroxil, and other antiviral and anticancer drugs. Transports the dipeptide-like aminopeptidase inhibitor bestatin. Also able to transport carnosine. Involved in innate immunity by promoting the detection of microbial pathogens by NOD-like receptors (NLRs). Mediates transport of bacterial peptidoglycans across the plasma membrane or, in macrophages, the phagosome membrane: catalyzes the transport of certain bacterial peptidoglycans, such as muramyl dipeptide (MDP), the NOD2 ligand. This chain is Solute carrier family 15 member 2, found in Mus musculus (Mouse).